Consider the following 446-residue polypeptide: Casein kinase I homolog 1 (446 aa).

One can recognise a Protein kinase domain in the interval 12 to 274; that stretch reads YKVGRRIGEG…FDATPDYDYL (263 aa). Residues 18–26 and K41 contribute to the ATP site; that span reads IGEGSFGVI. D131 (proton acceptor) is an active-site residue. Residues 308-430 form a disordered region; sequence KSRNAETENQ…ETEAPKKKKS (123 aa). A Phosphoserine modification is found at S329. Positions 332–345 are enriched in polar residues; sequence PALQNHASTQNVVS. Basic and acidic residues predominate over residues 346–355; the sequence is KRSDYEKPFA. Polar residues predominate over residues 360–397; that stretch reads NSASDSAEPNQNSLPNPPTETKATTTVPDRSGLATNQP. A compositionally biased stretch (basic and acidic residues) spans 401-412; it reads DVHDSSEERVTR.

It belongs to the protein kinase superfamily. CK1 Ser/Thr protein kinase family. Casein kinase I subfamily.

Its subcellular location is the cytoplasm. The catalysed reaction is L-seryl-[protein] + ATP = O-phospho-L-seryl-[protein] + ADP + H(+). The enzyme catalyses L-threonyl-[protein] + ATP = O-phospho-L-threonyl-[protein] + ADP + H(+). Functionally, casein kinases are operationally defined by their preferential utilization of acidic proteins such as caseins as substrates. The protein is Casein kinase I homolog 1 (cki1) of Schizosaccharomyces pombe (strain 972 / ATCC 24843) (Fission yeast).